Reading from the N-terminus, the 305-residue chain is Aspartate carbamoyltransferase catalytic subunit (305 aa).

Residues Arg-53 and Thr-54 each contribute to the carbamoyl phosphate site. Lys-82 serves as a coordination point for L-aspartate. Positions 103, 131, and 134 each coordinate carbamoyl phosphate. L-aspartate contacts are provided by Arg-164 and Arg-226. Residues Leu-265 and Pro-266 each coordinate carbamoyl phosphate.

It belongs to the aspartate/ornithine carbamoyltransferase superfamily. ATCase family. Heterooligomer of catalytic and regulatory chains.

The enzyme catalyses carbamoyl phosphate + L-aspartate = N-carbamoyl-L-aspartate + phosphate + H(+). It functions in the pathway pyrimidine metabolism; UMP biosynthesis via de novo pathway; (S)-dihydroorotate from bicarbonate: step 2/3. In terms of biological role, catalyzes the condensation of carbamoyl phosphate and aspartate to form carbamoyl aspartate and inorganic phosphate, the committed step in the de novo pyrimidine nucleotide biosynthesis pathway. This Ignicoccus hospitalis (strain KIN4/I / DSM 18386 / JCM 14125) protein is Aspartate carbamoyltransferase catalytic subunit.